A 138-amino-acid chain; its full sequence is Translation initiation factor 2 subunit beta (138 aa).

The protein belongs to the eIF-2-beta/eIF-5 family. In terms of assembly, heterotrimer composed of an alpha, a beta and a gamma chain.

In terms of biological role, eIF-2 functions in the early steps of protein synthesis by forming a ternary complex with GTP and initiator tRNA. The protein is Translation initiation factor 2 subunit beta of Methanopyrus kandleri (strain AV19 / DSM 6324 / JCM 9639 / NBRC 100938).